A 132-amino-acid chain; its full sequence is Cell division protein FtsL (132 aa).

Residues 1–50 (MAELKKMRHNHYDVPVMDEPVIASQIKKTNQKKESFQLPQKKLNKISVFE) are Cytoplasmic-facing. A helical transmembrane segment spans residues 51–71 (KILCILLLCSIVGIVVITIQI). The Extracellular portion of the chain corresponds to 72–132 (RTTISETMNN…EIDGNLRKVK (61 aa)).

Belongs to the FtsL family.

The protein resides in the cell membrane. In terms of biological role, essential cell division protein. This is Cell division protein FtsL from Melissococcus plutonius (strain ATCC 35311 / DSM 29964 / CIP 104052 / LMG 20360 / NCIMB 702443).